Consider the following 232-residue polypeptide: Putative homeobox protein NANOG2 (232 aa).

Over residues 1–10 (MDLPIEDSHD) the composition is skewed to basic and acidic residues. The tract at residues 1–39 (MDLPIEDSHDSSTSPKGKQPTTAEKSATKKEDKVPVKKQ) is disordered. The segment covering 11–25 (SSTSPKGKQPTTAEK) has biased composition (polar residues). Over residues 26 to 35 (SATKKEDKVP) the composition is skewed to basic and acidic residues. 8 repeat units span residues 123-127 (WSNQT), 128-132 (WNNSI), 133-137 (WSNET), 143-147 (WSNHS), 148-152 (WNTQT), 153-157 (WCTQS), 158-162 (WNNQA), and 163-167 (WNSPF). Residues 123-167 (WSNQTWNNSIWSNETQNIQSWSNHSWNTQTWCTQSWNNQAWNSPF) form an 8 X repeats starting with a Trp in each unit region. Positions 123–167 (WSNQTWNNSIWSNETQNIQSWSNHSWNTQTWCTQSWNNQAWNSPF) are sufficient for transactivation activity. Residues 168-232 (YNCGEESLQS…YSTNMQPEDV (65 aa)) are sufficient for strong transactivation activity.

It belongs to the Nanog homeobox family.

The protein resides in the nucleus. Probable transcriptional regulator. The chain is Putative homeobox protein NANOG2 (NANOGP1) from Pan troglodytes (Chimpanzee).